The chain runs to 570 residues: Sulfite reductase [NADPH] hemoprotein beta-component 1 (570 aa).

C434, C440, C479, and C483 together coordinate [4Fe-4S] cluster. C483 serves as a coordination point for siroheme.

This sequence belongs to the nitrite and sulfite reductase 4Fe-4S domain family. As to quaternary structure, alpha(8)-beta(8). The alpha component is a flavoprotein, the beta component is a hemoprotein. Siroheme is required as a cofactor. It depends on [4Fe-4S] cluster as a cofactor.

The enzyme catalyses hydrogen sulfide + 3 NADP(+) + 3 H2O = sulfite + 3 NADPH + 4 H(+). It participates in sulfur metabolism; hydrogen sulfide biosynthesis; hydrogen sulfide from sulfite (NADPH route): step 1/1. Functionally, component of the sulfite reductase complex that catalyzes the 6-electron reduction of sulfite to sulfide. This is one of several activities required for the biosynthesis of L-cysteine from sulfate. The chain is Sulfite reductase [NADPH] hemoprotein beta-component 1 from Klebsiella pneumoniae (strain 342).